The sequence spans 853 residues: MCCEKWNHVAEMLLFIEDREEEYKILCLCSRAFVEDRKLYNLGLKGYYVKSSGNNAGDQGTEEEEDGHSNGTAESHSPNESDLDSEAKLMRSMGLPIQFGRMSSHENFEMSMNARNKAKVKQKRRKHQKRYLDEMVRESWRNDYEEDDLVVSDDPSSVEHCENNRTCEIQSKAGSEVENLPVENTLAPKLEVPENWEKYWNEYGEGLLWQSWQEKYPDQTLSSEPWNLPDTKEEWEQHYSQLYWYYLEQFQYWEAQGWTFTASQNCDKDVYTSHTEVDQNAESSLKADVMTFSSSPNIVEDEIPGSNDNDHNEIITAINNITVSAEKVEQSQLDSSQHCDEPLSEITGKECPASGGSDSCNGTPKENDISENRSSDQPAKELQESSGTNKGKHRPHHNGADGHESDDDPPEHKPSKVKRSHELDVDENPDSEVDDNGFLLGFKHGSGQKYGGIPNFSHRQVRYLEKNVKYKSKYLDLRKQMPVKSKHILFTEDSGKPFVVCKSKVRSKVEKFLKWVNERVDEETSQDSLSQNKMQDTCTSSDSEEQDMSLEKADNLMETRDPEPEKCQIISSATELEAEKSEVGSLVATVPENCSTEEIPNSPHAETEVEIKKKKKKNKNKKINDLPPEIASVPELAKYWAQRYRLFSRFDDGIKLDKEGWFSVTPEKIAEHIAGRVSQAFRCDVVVDAFCGVGGNTIQFALTGKRVIAIDIDPVKIDLARNNAEVYGIADKIEFICGDFLLLAPCLKADVVFLSPPWGGPDYATAETFDIRTMMSPDGFEIFRLSQKITNNIVYFLPRNADIDQVASLAGLGGQVEIEQNFLNNKLKTITAYFGDLIRRPALLKTSTSEAEV.

Residues 54-84 (NNAGDQGTEEEEDGHSNGTAESHSPNESDLD) are disordered. Phosphothreonine is present on T61. The span at 69-80 (SNGTAESHSPNE) shows a compositional bias: polar residues. A phosphoserine mark is found at S81, S85, S92, and S139. Position 144 is a phosphotyrosine (Y144). S152 is modified (phosphoserine). Disordered regions lie at residues 328-437 (VEQS…DDNG) and 523-549 (ETSQ…QDMS). Positions 365-383 (KENDISENRSSDQPAKELQ) are enriched in basic and acidic residues. Phosphoserine is present on residues S405 and S431. Acidic residues predominate over residues 424 to 435 (DVDENPDSEVDD). The span at 526-541 (QDSLSQNKMQDTCTSS) shows a compositional bias: polar residues. Phosphoserine is present on S572. A disordered region spans residues 594-623 (CSTEEIPNSPHAETEVEIKKKKKKNKNKKI). Positions 612 to 621 (KKKKKKNKNK) are enriched in basic residues. Residue D711 participates in S-adenosyl-L-methionine binding.

It belongs to the methyltransferase superfamily. Trimethylguanosine synthase family. May form homooligomers. Interacts with CREBBP/CBP, EED/WAIT1, EP300/P300, NCOA6/PRIP, PPARBP/PBP and SMN. In terms of tissue distribution, ubiquitously expressed.

It is found in the cytoplasm. The protein localises to the nucleus. It localises to the cajal body. Its subcellular location is the nucleolus. The enzyme catalyses a 5'-end (N(7)-methyl 5'-triphosphoguanosine)-ribonucleoside in snRNA + S-adenosyl-L-methionine = a 5'-end (N(2),N(7)-dimethyl 5'-triphosphoguanosine)-ribonucleoside in snRNA + S-adenosyl-L-homocysteine + H(+). It catalyses the reaction a 5'-end (N(7)-methyl 5'-triphosphoguanosine)-ribonucleoside in snoRNA + S-adenosyl-L-methionine = a 5'-end (N(2),N(7)-dimethyl 5'-triphosphoguanosine)-ribonucleoside in snoRNA + S-adenosyl-L-homocysteine + H(+). It carries out the reaction a 5'-end (N(2),N(7)-dimethyl 5'-triphosphoguanosine)-ribonucleoside in snRNA + S-adenosyl-L-methionine = a 5'-end (N(2),N(2),N(7)-trimethyl 5'-triphosphoguanosine)-ribonucleoside in snRNA + S-adenosyl-L-homocysteine + H(+). The catalysed reaction is a 5'-end (N(2),N(7)-dimethyl 5'-triphosphoguanosine)-ribonucleoside in snoRNA + S-adenosyl-L-methionine = a 5'-end (N(2),N(2),N(7)-trimethyl 5'-triphosphoguanosine)-ribonucleoside in snoRNA + S-adenosyl-L-homocysteine + H(+). In terms of biological role, catalyzes the 2 serial methylation steps for the conversion of the 7-monomethylguanosine (m(7)G) caps of snRNAs and snoRNAs to a 2,2,7-trimethylguanosine (m(2,2,7)G) cap structure. The enzyme is specific for guanine, and N7 methylation must precede N2 methylation. Hypermethylation of the m7G cap of U snRNAs leads to their concentration in nuclear foci, their colocalization with coilin and the formation of canonical Cajal bodies (CBs). Plays a role in transcriptional regulation. This Mus musculus (Mouse) protein is Trimethylguanosine synthase (Tgs1).